The following is a 699-amino-acid chain: TPR repeat-containing thioredoxin TTL1 (699 aa).

Residues 1 to 211 (MPKSVKPISE…SSSRSSSTVA (211 aa)) form a disordered region. Basic and acidic residues predominate over residues 9-20 (SESDKLSDHLRD). Serine 39 and serine 42 each carry phosphoserine. 2 stretches are compositionally biased toward low complexity: residues 52–70 (TTTT…SSGS) and 83–135 (RSNS…TSPA). The span at 166 to 182 (SGTGTYGHGSIMRGGGI) shows a compositional bias: gly residues. Over residues 195-210 (NSPVNVGSSSRSSSTV) the composition is skewed to low complexity. TPR repeat units follow at residues 227–260 (SEEV…SPTN), 262–294 (AYRS…DPNY), 296–328 (RAHH…SDPM), 419–452 (AYIY…DPRC), 465–498 (VARA…DPCN), 499–532 (AILY…QPSY), and 534–566 (KPLL…LPHD). The 87-residue stretch at 605 to 691 (QFKSAMNLPG…IVCPSKEVLE (87 aa)) folds into the Thioredoxin domain.

Expressed in the root elongation zone, stele, root cap, embryo vascular system, leaf axilar buds, silique abscission zone and guard cells.

Its function is as follows. Involved in responses to osmotic stress and abscisic acid (ABA). May act as a positive regulator of ABA signaling during germination and seedling development under stress. This is TPR repeat-containing thioredoxin TTL1 (TTL1) from Arabidopsis thaliana (Mouse-ear cress).